The primary structure comprises 482 residues: UDP-N-acetylmuramate--L-alanine ligase (482 aa).

129 to 135 (GTHGKTT) serves as a coordination point for ATP.

The protein belongs to the MurCDEF family.

Its subcellular location is the cytoplasm. It catalyses the reaction UDP-N-acetyl-alpha-D-muramate + L-alanine + ATP = UDP-N-acetyl-alpha-D-muramoyl-L-alanine + ADP + phosphate + H(+). The protein operates within cell wall biogenesis; peptidoglycan biosynthesis. In terms of biological role, cell wall formation. The polypeptide is UDP-N-acetylmuramate--L-alanine ligase (Acinetobacter baylyi (strain ATCC 33305 / BD413 / ADP1)).